We begin with the raw amino-acid sequence, 984 residues long: PAX-interacting protein 1 (984 aa).

BRCT domains follow at residues 8–93 (VPEE…GFSP) and 94–183 (ESCQ…LYHP). An interaction with PAGR1 region spans residues 94-183 (ESCQIFFGIT…TRKDEALYHP (90 aa)). 2 disordered regions span residues 187-271 (VYEE…PAEV) and 417-509 (QQHL…LFGH). A compositionally biased stretch (acidic residues) spans 188–208 (YEEEEEEEEEEEGAGNEEPDS). Positions 217–229 (KSSPASSQEGSPS) are enriched in low complexity. 2 positions are modified to phosphoserine: serine 227 and serine 235. The span at 424 to 454 (PYPPPPPHPFPPPPAHPHQFPQPPLQRPQPP) shows a compositional bias: pro residues. A compositionally biased stretch (low complexity) spans 455–485 (LQQQQLSHLQQQQLQHLQRLQQMQPTPTAQL). Pro residues predominate over residues 486-499 (PGPPAQALQPPPPQ). An interaction with TP53BP1 region spans residues 505 to 984 (PLFGHDPAVE…TLDYESYKFN (480 aa)). BRCT domains lie at 516-609 (PEEG…RALH) and 616-704 (PGGK…TQYG). Residues 583–600 (RKRCITAHWLNTVLKKKK) carry the Nuclear localization signal motif. Positions 750–771 (KQNEVTNVQPSSKRARIEDIPP) are disordered. Positions 752 to 761 (NEVTNVQPSS) are enriched in polar residues. 2 consecutive BRCT domains span residues 781–862 (TPFV…NYLL) and 883–924 (HASP…QPSF).

Interacts with the C-terminal transactivation domain of PAX2. Forms a constitutive complex with PAGR1 independently of the MLL2/MLL3 complex. Interacts with TP53BP1 (when phosphorylated at the N-terminus by ATM). Interacts with HLTF. Component of the KMT2 family MLL2/MLL3 complex (also named ASCOM complex), at least composed of the HMTs KMT2D and/or KMT2C, the common subunits ASH2L, RBBP5, WDR5 and DPY30, and the complex type-specific subunits PAXIP1/PTIP, PAGR1, NCOA6 and KDM6A; required for the association of PAGR1 with the MLL2/MLL3 complex. Interacts with NUPR1; this interaction prevents PAXIP1 inhibition of PAX2 transcription factor activity.

It is found in the nucleus matrix. Its subcellular location is the chromosome. In terms of biological role, involved in DNA damage response and in transcriptional regulation through histone methyltransferase (HMT) complexes. Plays a role in early development. In DNA damage response is required for cell survival after ionizing radiation. In vitro shown to be involved in the homologous recombination mechanism for the repair of double-strand breaks (DSBs). Its localization to DNA damage foci requires RNF8 and UBE2N. Recruits TP53BP1 to DNA damage foci and, at least in particular repair processes, effective DNA damage response appears to require the association with TP53BP1 phosphorylated by ATM at 'Ser-25'. Together with TP53BP1 regulates ATM association. Proposed to recruit PAGR1 to sites of DNA damage and the PAGR1:PAXIP1 complex is required for cell survival in response to DNA damage; the function is probably independent of MLL-containing histone methyltransferase (HMT) complexes. However, this function has been questioned. Promotes ubiquitination of PCNA following UV irradiation and may regulate recruitment of polymerase eta and RAD51 to chromatin after DNA damage. Proposed to be involved in transcriptional regulation by linking MLL-containing histone methyltransferase (HMT) complexes to gene promoters by interacting with promoter-bound transcription factors such as PAX2. Associates with gene promoters that are known to be regulated by KMT2D/MLL2. During immunoglobulin class switching in activated B-cells is involved in trimethylation of histone H3 at 'Lys-4' and in transcription initiation of downstream switch regions at the immunoglobulin heavy-chain (Igh) locus; this function appears to involve the recruitment of MLL-containing HMT complexes. Conflictingly, its function in transcriptional regulation during immunoglobulin class switching is reported to be independent of the MLL2/MLL3 complex. The sequence is that of PAX-interacting protein 1 (PAXIP1) from Bos taurus (Bovine).